We begin with the raw amino-acid sequence, 292 residues long: Protease HtpX (292 aa).

A run of 2 helical transmembrane segments spans residues 4–24 (IILF…ILAV) and 32–52 (IYGL…LSLI). His-139 contacts Zn(2+). Residue Glu-140 is part of the active site. His-143 is a binding site for Zn(2+). 2 helical membrane passes run 150 to 170 (ITMT…SRII) and 193 to 213 (FLFF…ASII). Glu-222 lines the Zn(2+) pocket.

Belongs to the peptidase M48B family. Requires Zn(2+) as cofactor.

It localises to the cell membrane. This chain is Protease HtpX, found in Buchnera aphidicola subsp. Schizaphis graminum (strain Sg).